The following is a 110-amino-acid chain: Iron-sulfur cluster assembly protein CyaY (110 aa).

This sequence belongs to the frataxin family.

In terms of biological role, involved in iron-sulfur (Fe-S) cluster assembly. May act as a regulator of Fe-S biogenesis. The chain is Iron-sulfur cluster assembly protein CyaY from Pseudomonas syringae pv. syringae (strain B728a).